Here is a 170-residue protein sequence, read N- to C-terminus: Probable inosine/xanthosine triphosphatase (170 aa).

Residue E31 participates in Mg(2+) binding.

It belongs to the YjjX NTPase family. In terms of assembly, homodimer. It depends on Mg(2+) as a cofactor. Requires Mn(2+) as cofactor.

The enzyme catalyses XTP + H2O = XDP + phosphate + H(+). The catalysed reaction is ITP + H2O = IDP + phosphate + H(+). Its function is as follows. Phosphatase that hydrolyzes non-canonical purine nucleotides such as XTP and ITP to their respective diphosphate derivatives. Probably excludes non-canonical purines from DNA/RNA precursor pool, thus preventing their incorporation into DNA/RNA and avoiding chromosomal lesions. The sequence is that of Probable inosine/xanthosine triphosphatase from Oceanobacillus iheyensis (strain DSM 14371 / CIP 107618 / JCM 11309 / KCTC 3954 / HTE831).